A 394-amino-acid polypeptide reads, in one-letter code: Mitogen-activated protein kinase homolog D5 (394 aa).

A Protein kinase domain is found at 62–347; sequence RPPIMPIGKG…VENALAHPYL (286 aa). ATP contacts are provided by residues 68–76 and K91; that span reads IGKGAYGIV. Catalysis depends on D188, which acts as the Proton acceptor. Residue T220 is modified to Phosphothreonine. A TXY motif is present at residues 220-222; sequence TEY. Position 222 is a phosphotyrosine (Y222).

It belongs to the protein kinase superfamily. CMGC Ser/Thr protein kinase family. MAP kinase subfamily. Mg(2+) is required as a cofactor. In terms of processing, dually phosphorylated on Thr-220 and Tyr-222, which activates the enzyme. Leaves, roots, root apices, and dormant and growing axillary buds.

It catalyses the reaction L-seryl-[protein] + ATP = O-phospho-L-seryl-[protein] + ADP + H(+). The enzyme catalyses L-threonyl-[protein] + ATP = O-phospho-L-threonyl-[protein] + ADP + H(+). Activated by tyrosine and threonine phosphorylation. In Pisum sativum (Garden pea), this protein is Mitogen-activated protein kinase homolog D5.